Consider the following 367-residue polypeptide: Anhydro-N-acetylmuramic acid kinase (367 aa).

Position 10–17 (10–17 (GTSLDGVD)) interacts with ATP.

The protein belongs to the anhydro-N-acetylmuramic acid kinase family.

It catalyses the reaction 1,6-anhydro-N-acetyl-beta-muramate + ATP + H2O = N-acetyl-D-muramate 6-phosphate + ADP + H(+). The protein operates within amino-sugar metabolism; 1,6-anhydro-N-acetylmuramate degradation. It functions in the pathway cell wall biogenesis; peptidoglycan recycling. Catalyzes the specific phosphorylation of 1,6-anhydro-N-acetylmuramic acid (anhMurNAc) with the simultaneous cleavage of the 1,6-anhydro ring, generating MurNAc-6-P. Is required for the utilization of anhMurNAc either imported from the medium or derived from its own cell wall murein, and thus plays a role in cell wall recycling. This is Anhydro-N-acetylmuramic acid kinase from Aliivibrio fischeri (strain ATCC 700601 / ES114) (Vibrio fischeri).